The following is a 551-amino-acid chain: Protein GPR107 (551 aa).

A signal peptide spans 1–33 (MAVRVPLGCTGSFCPRLLPLLALLELLVDPSLG). The Extracellular portion of the chain corresponds to 34-262 (RVHHLALKDD…YLSAGEIPLP (229 aa)). Asparagine 64 carries N-linked (GlcNAc...) asparagine glycosylation. Residues 127 to 183 (GVKVRSPPEAGKQLPEIVFSKDEKVPSRSQEPAVSSNPKDSKVQRTPDGSKAQRSTV) form a disordered region. The segment covering 153–164 (SRSQEPAVSSNP) has biased composition (polar residues). The N-linked (GlcNAc...) asparagine glycan is linked to asparagine 209. Residues 263-283 (KLYVSMALLFFLSGTVWIHIL) form a helical membrane-spanning segment. Residues 284-292 (RKRRNDVFK) lie on the Cytoplasmic side of the membrane. Residues 293 to 313 (IHWLMAALPFTKSLSLVFHAI) form a helical membrane-spanning segment. Residues 314–336 (DYHYISSQGFPIEGWAVVYYITH) lie on the Extracellular side of the membrane. A helical membrane pass occupies residues 337 to 357 (LLKGALLFITIALIGTGWAFI). The Cytoplasmic portion of the chain corresponds to 358–367 (KHILSDKDKK). Residues 368-388 (IFMIVIPLQVLANVAYIIIES) traverse the membrane as a helical segment. Residues 389-401 (TEEGTTEYGLWKD) are Extracellular-facing. Residues 402 to 422 (SLFLVDLLCCGAILFPVVWSI) form a helical membrane-spanning segment. Residues 423-443 (RHLQEASATDGKAAINLAKLK) lie on the Cytoplasmic side of the membrane. The helical transmembrane segment at 444 to 466 (LFRHYYVLIVCYIYFTRIIAFLL) threads the bilayer. Over 467–475 (KFAVPFQWK) the chain is Extracellular. A helical transmembrane segment spans residues 476–495 (WLYQLLDETATLVFFVLTGY). Over 496–551 (KFRPASDNPYLQLSQEEDDLEMESVVTTSGVMENMKKVKKVSNGAVEPQGSWEGTA) the chain is Cytoplasmic.

The protein belongs to the LU7TM family. Cleaved by FURIN to yield two fragments that remain associated via a disulfide bond. In terms of tissue distribution, widely expressed. Not detected in the duodenum, nor in the exocrine pancreas.

It is found in the cell membrane. Its subcellular location is the golgi apparatus. The protein localises to the trans-Golgi network membrane. Functionally, has been proposed to act as a receptor for neuronostatin, a peptide derived from the somatostatin/SST precursor. Involved in blood sugar regulation through the induction of glucagon in response to low glucose. This chain is Protein GPR107 (Gpr107), found in Rattus norvegicus (Rat).